The chain runs to 202 residues: uncharacterized protein (202 aa).

Positions 1-18 (MKNRLLILSLLVSVPAFA) are cleaved as a signal peptide.

This sequence to E.coli YebB.

This is an uncharacterized protein from Escherichia coli (strain K12).